The chain runs to 456 residues: Probable serine/threonine-protein kinase DDB_G0277449 (456 aa).

Over residues 50–83 (STSPTECEESSSSTITTPSEESLSSGEESSSISD) the composition is skewed to low complexity. The segment at 50–84 (STSPTECEESSSSTITTPSEESLSSGEESSSISDS) is disordered. A Protein kinase domain is found at 128 to 383 (FIIKHLVGKG…AIEIKRHPFF (256 aa)). ATP is bound by residues 134–142 (VGKGGFGKV) and lysine 157. The active-site Proton acceptor is the aspartate 251. The region spanning 384 to 455 (KSIQWRKIEN…VRTPVLLESQ (72 aa)) is the AGC-kinase C-terminal domain.

Belongs to the protein kinase superfamily. AGC Ser/Thr protein kinase family.

It catalyses the reaction L-seryl-[protein] + ATP = O-phospho-L-seryl-[protein] + ADP + H(+). It carries out the reaction L-threonyl-[protein] + ATP = O-phospho-L-threonyl-[protein] + ADP + H(+). The chain is Probable serine/threonine-protein kinase DDB_G0277449 from Dictyostelium discoideum (Social amoeba).